The sequence spans 92 residues: UPF0250 protein COSY_0496 (92 aa).

This sequence belongs to the UPF0250 family.

The protein is UPF0250 protein COSY_0496 of Vesicomyosocius okutanii subsp. Calyptogena okutanii (strain HA).